We begin with the raw amino-acid sequence, 91 residues long: Progonadoliberin-1 (91 aa).

A signal peptide spans 1 to 21; the sequence is MVVKTWMPWLLVSSVLSQGCC. Q22 carries the pyrrolidone carboxylic acid modification. The residue at position 31 (G31) is a Glycine amide.

Belongs to the GnRH family. Expressed in the cell bodies of a cluster of neurons in the preoptic region.

The protein resides in the secreted. In terms of biological role, stimulates the secretion of gonadotropins. This is Progonadoliberin-1 (gnrh1) from Oryzias latipes (Japanese rice fish).